We begin with the raw amino-acid sequence, 716 residues long: Polyribonucleotide nucleotidyltransferase (716 aa).

2 residues coordinate Mg(2+): aspartate 480 and aspartate 486. Positions 547–606 constitute a KH domain; the sequence is PKIVQLQIDIDKISLVIGSTGKTVKAITDEFEVKVQIEQNGKIILFGDDDFKMQKAKERI. One can recognise an S1 motif domain in the interval 616–711; that stretch reads GEIYEGTVKK…KFGKIDLEIV (96 aa).

This sequence belongs to the polyribonucleotide nucleotidyltransferase family. Mg(2+) is required as a cofactor.

It is found in the cytoplasm. The enzyme catalyses RNA(n+1) + phosphate = RNA(n) + a ribonucleoside 5'-diphosphate. Functionally, involved in mRNA degradation. Catalyzes the phosphorolysis of single-stranded polyribonucleotides processively in the 3'- to 5'-direction. The chain is Polyribonucleotide nucleotidyltransferase from Borreliella burgdorferi (strain ATCC 35210 / DSM 4680 / CIP 102532 / B31) (Borrelia burgdorferi).